Here is a 330-residue protein sequence, read N- to C-terminus: Malate dehydrogenase (330 aa).

An NAD(+)-binding site is contributed by 12 to 18 (GAAGQIG). Substrate is bound by residues arginine 93 and arginine 99. NAD(+) contacts are provided by residues asparagine 106, glutamine 113, and 130–132 (VGN). Residues asparagine 132 and arginine 163 each coordinate substrate. The active-site Proton acceptor is histidine 188.

It belongs to the LDH/MDH superfamily. MDH type 2 family.

It catalyses the reaction (S)-malate + NAD(+) = oxaloacetate + NADH + H(+). In terms of biological role, catalyzes the reversible oxidation of malate to oxaloacetate. This Legionella pneumophila (strain Lens) protein is Malate dehydrogenase.